Reading from the N-terminus, the 1203-residue chain is Regulator of telomere elongation helicase 1 (1203 aa).

Residues 7–296 enclose the Helicase ATP-binding domain; sequence NGVTVDFPFQ…ARVTQQGELQ (290 aa). 42-49 contacts ATP; it reads SPTGTGKT. [4Fe-4S] cluster contacts are provided by Cys145, Cys163, Cys172, and Cys207. Positions 151–167 match the Nuclear localization signal motif; it reads KKQESNHMQISLCRKKV. A DEAH box motif is present at residues 250–253; that stretch reads DEAH. The Nuclear localization signal motif lies at 871–877; it reads QKGGRKK. Disordered regions lie at residues 998–1020 and 1120–1203; these read QLDP…TSKG and TTGK…RSKQ. Residues 1123–1134 are compositionally biased toward basic and acidic residues; that stretch reads KDLELEGPRDES. A PIP-box motif is present at residues 1160–1167; the sequence is QSKISSFF. Positions 1169–1181 are enriched in basic and acidic residues; it reads QRPDESVRSDDTT.

Belongs to the helicase family. RAD3/XPD subfamily. Interacts with TERF1. Interacts (via PIP-box) with PCNA; the interaction is direct and essential for suppressing telomere fragility. Interacts with MMS19; the interaction mediates the association of RTEL1 with the cytosolic iron-sulfur protein assembly (CIA) complex.

It is found in the nucleus. The catalysed reaction is ATP + H2O = ADP + phosphate + H(+). Its function is as follows. A probable ATP-dependent DNA helicase implicated in telomere-length regulation, DNA repair and the maintenance of genomic stability. Acts as an anti-recombinase to counteract toxic recombination and limit crossover during meiosis. Regulates meiotic recombination and crossover homeostasis by physically dissociating strand invasion events and thereby promotes noncrossover repair by meiotic synthesis dependent strand annealing (SDSA) as well as disassembly of D loop recombination intermediates. Also disassembles T loops and prevents telomere fragility by counteracting telomeric G4-DNA structures, which together ensure the dynamics and stability of the telomere. The chain is Regulator of telomere elongation helicase 1 (Rtel1) from Mus spretus (Western Mediterranean mouse).